The chain runs to 440 residues: Metacaspase-1 (440 aa).

Residues 1–134 (MFPGSGRKTY…NPQGFGQNSG (134 aa)) are disordered. Over residues 14-51 (APPPGPPNGYQYGPPPGAQGQYPPPQGYPPQGYPPQGY) the composition is skewed to pro residues. The span at 52–81 (PPQGYAPQGYPPQGYAPQGYAPQGYQQQGG) shows a compositional bias: low complexity. Residues 82 to 94 (QQQGGQQQGGQQQ) are compositionally biased toward gly residues. Polar residues predominate over residues 98 to 110 (RQTYATQEAQNFG). Residues H230 and C286 contribute to the active site.

It belongs to the peptidase C14B family.

Its function is as follows. Involved in cell death (apoptosis). This chain is Metacaspase-1 (MCA1), found in Debaryomyces hansenii (strain ATCC 36239 / CBS 767 / BCRC 21394 / JCM 1990 / NBRC 0083 / IGC 2968) (Yeast).